We begin with the raw amino-acid sequence, 212 residues long: Pyridoxine/pyridoxamine 5'-phosphate oxidase (212 aa).

Substrate-binding positions include 8-11 (RREY) and Lys-66. FMN-binding positions include 61-66 (RIVLLK), 76-77 (FT), Arg-82, Lys-83, and Gln-105. Residues Tyr-123, Arg-127, and Ser-131 each contribute to the substrate site. FMN contacts are provided by residues 140–141 (QS) and Trp-185. 191–193 (RLH) contacts substrate. Arg-195 is an FMN binding site.

This sequence belongs to the pyridoxamine 5'-phosphate oxidase family. In terms of assembly, homodimer. FMN is required as a cofactor.

The enzyme catalyses pyridoxamine 5'-phosphate + O2 + H2O = pyridoxal 5'-phosphate + H2O2 + NH4(+). The catalysed reaction is pyridoxine 5'-phosphate + O2 = pyridoxal 5'-phosphate + H2O2. It participates in cofactor metabolism; pyridoxal 5'-phosphate salvage; pyridoxal 5'-phosphate from pyridoxamine 5'-phosphate: step 1/1. It functions in the pathway cofactor metabolism; pyridoxal 5'-phosphate salvage; pyridoxal 5'-phosphate from pyridoxine 5'-phosphate: step 1/1. Its function is as follows. Catalyzes the oxidation of either pyridoxine 5'-phosphate (PNP) or pyridoxamine 5'-phosphate (PMP) into pyridoxal 5'-phosphate (PLP). The chain is Pyridoxine/pyridoxamine 5'-phosphate oxidase from Shewanella sp. (strain MR-4).